Consider the following 226-residue polypeptide: V-type proton ATPase subunit E (226 aa).

It belongs to the V-ATPase E subunit family. As to quaternary structure, V-ATPase is a heteromultimeric enzyme composed of a peripheral catalytic V1 complex (components A to H) attached to an integral membrane V0 proton pore complex (components: a, c, c', c'', d, e, f and VOA1).

It is found in the vacuole membrane. In terms of biological role, subunit of the V1 complex of vacuolar(H+)-ATPase (V-ATPase), a multisubunit enzyme composed of a peripheral complex (V1) that hydrolyzes ATP and a membrane integral complex (V0) that translocates protons. V-ATPase is responsible for acidifying and maintaining the pH of intracellular compartments. This is V-type proton ATPase subunit E (VMA4) from Candida albicans (Yeast).